The following is a 320-amino-acid chain: Polyisoprenyl-teichoic acid--peptidoglycan teichoic acid transferase TagU (320 aa).

At 1–15 (MVSRTERKQHKKRRK) the chain is on the cytoplasmic side. A helical; Signal-anchor for type II membrane protein transmembrane segment spans residues 16-36 (WPFWLGGILLVLLLLISGGIF). The Extracellular segment spans residues 37–320 (LIYNQVGAVV…SEITGHMQEQ (284 aa)).

Belongs to the LytR/CpsA/Psr (LCP) family.

It is found in the cell membrane. Its pathway is cell wall biogenesis. Its function is as follows. May catalyze the final step in cell wall teichoic acid biosynthesis, the transfer of the anionic cell wall polymers (APs) from their lipid-linked precursor to the cell wall peptidoglycan (PG). The chain is Polyisoprenyl-teichoic acid--peptidoglycan teichoic acid transferase TagU from Oceanobacillus iheyensis (strain DSM 14371 / CIP 107618 / JCM 11309 / KCTC 3954 / HTE831).